Reading from the N-terminus, the 274-residue chain is Nitrogenase iron protein (274 aa).

Residue 8 to 15 participates in ATP binding; the sequence is GKGGIGKS. C94 lines the [4Fe-4S] cluster pocket. ADP-ribosylarginine; by dinitrogenase reductase ADP-ribosyltransferase is present on R97. A [4Fe-4S] cluster-binding site is contributed by C131.

This sequence belongs to the NifH/BchL/ChlL family. In terms of assembly, homodimer. [4Fe-4S] cluster is required as a cofactor. The reversible ADP-ribosylation of Arg-97 inactivates the nitrogenase reductase and regulates nitrogenase activity.

The catalysed reaction is N2 + 8 reduced [2Fe-2S]-[ferredoxin] + 16 ATP + 16 H2O = H2 + 8 oxidized [2Fe-2S]-[ferredoxin] + 2 NH4(+) + 16 ADP + 16 phosphate + 6 H(+). The key enzymatic reactions in nitrogen fixation are catalyzed by the nitrogenase complex, which has 2 components: the iron protein and the molybdenum-iron protein. This is Nitrogenase iron protein from Chlorobium limicola (strain DSM 245 / NBRC 103803 / 6330).